The primary structure comprises 335 residues: MYFQILVLMSEGYGRSLFSEKHFPHDRQLLPPFTTTMSLGSFFSFPASSAFFDRKKDDGVIDNPNVELVNRNLWSTFLECGTEMIITKKGRRMFPLVKLKLSGLDKNSNYTIIMEMISVDKLRYKFWNGNWIVAGVGEHHPLPTCFVHPQSPRSGEWWMTDGVDFKMAKLSNNPFNNDGHIVLNSMHRYNPRFHIVRADSSGQPILASLKTFSFKETEFIAVTAYQNDVVTKCKIDNNPFAKGFRNIDTVRKRKMNQIISTPPASEDEEPEVKRTKSEIEAVMFSDPKVPQMSLQLISQWQEALLSTIVQIPITNQKSSSERKSGFGVVDLLGSS.

Residues 73 to 246 (LWSTFLECGT…NNPFAKGFRN (174 aa)) constitute a DNA-binding region (T-box).

The protein resides in the nucleus. This is Putative T-box protein 7 from Caenorhabditis elegans.